Consider the following 61-residue polypeptide: Conotoxin Vn5.3 (61 aa).

Residues Met1–Gly19 form the signal peptide. Positions Val20–Arg50 are excised as a propeptide.

It belongs to the conotoxin T superfamily. Post-translationally, contains 2 disulfide bonds that can be either 'C1-C3, C2-C4' or 'C1-C4, C2-C3', since these disulfide connectivities have been observed for conotoxins with cysteine framework V (for examples, see AC P0DQQ7 and AC P81755). As to expression, expressed by the venom duct.

The protein localises to the secreted. The chain is Conotoxin Vn5.3 from Conus ventricosus (Mediterranean cone).